The chain runs to 523 residues: Cytochrome P450 monooxygenase bsc5 (523 aa).

Residues 16-36 (MQLHWTVLGLLPVLFIAILGP) traverse the membrane as a helical segment. N-linked (GlcNAc...) asparagine glycans are attached at residues N178, N281, and N403. Residue C459 coordinates heme.

The protein belongs to the cytochrome P450 family. Heme serves as cofactor.

It localises to the membrane. Its pathway is mycotoxin biosynthesis. Functionally, cytochrome P450 monooxygenase; part of the gene cluster that mediates the biosynthesis of the diterpene glucoside brassicicene C. In the first step of the brassicicene C biosynthesis, the bifunctional diterpene synthase bsc8 that possesses both prenyl transferase and terpene cyclase activity, converts isopentenyl diphosphate and dimethylallyl diphosphate into geranylgeranyl diphosphate (GGDP) that is further converted into fusicocca-2,10(14)-diene, the first precursor for brassicicene C. Fusicocca-2,10(14)-diene is then substrate of cytochrome P450 monooxygenase bsc1 for hydroxylation at the C-8 position. Oxidation at C-16 position to aldehyde is then catalyzed by the cytochrome P450 monooyxygenase bsc7, yielding fusicocca-2,10(14)-diene-8-beta,16-diol. Follows the isomerization of the double bond and reduction of aldehyde to alcohol catalyzed by the short-chain dehydrogenase/reductase bsc3 to yield the diol compound fusicocca-1,10(14)-diene-8 beta,16-diol. The next step is the oxidation at the C-3 position of fusicocca-2,10(14)-diene-8-beta,16-diol catalyzed by the alpha-ketoglutarate dependent dioxygenase bsc9, to produce a triol compound. Methylation of the hydroxy group at position 16 is performed by the methyltransferase bsc6. 16-O-methylation is followed by oxidation at the C-13 position to ketone and an alkyl shift of the methyl group leads to brassicicene C. Although the probable acetyltransferase bsc4 is included in the gene cluster, no acetylation reactions are necessary for brassicicene C biosynthesis. However, the fact that brassicicene E, which is a structurally related compound having an acetoxy group at position 12, was previously isolated from another strain of A.brassicicola suggests that the ATCC 96836 strain might also produce a small amount of brassicicene E. The protein is Cytochrome P450 monooxygenase bsc5 of Alternaria brassicicola (Dark leaf spot agent).